Here is a 285-residue protein sequence, read N- to C-terminus: Putative sugar uptake protein lmo0169 (285 aa).

10 helical membrane-spanning segments follow: residues 5-24 (IALI…SKIG), 31-48 (IIGT…VFIF), 53-71 (YTAT…WSLG), 84-106 (VSKT…GVFA), 116-135 (LVLG…LTSY), 151-173 (IITL…WFDI), 178-195 (AILP…LFSI), 207-226 (WLNM…LLFS), 232-254 (IATG…ILFL), and 263-282 (LILV…MIGI).

This sequence belongs to the GRP transporter (TC 2.A.7.5) family.

The protein localises to the cell membrane. The polypeptide is Putative sugar uptake protein lmo0169 (Listeria monocytogenes serovar 1/2a (strain ATCC BAA-679 / EGD-e)).